Here is a 334-residue protein sequence, read N- to C-terminus: Inositol 2-dehydrogenase (334 aa).

Belongs to the Gfo/Idh/MocA family. Homotetramer.

It carries out the reaction myo-inositol + NAD(+) = scyllo-inosose + NADH + H(+). Functionally, involved in the oxidation of myo-inositol (MI) to 2-keto-myo-inositol (2KMI or 2-inosose). This chain is Inositol 2-dehydrogenase, found in Cereibacter sphaeroides (strain ATCC 17029 / ATH 2.4.9) (Rhodobacter sphaeroides).